A 369-amino-acid chain; its full sequence is Cytochrome P450 monooxygenase apf8 (369 aa).

Cys303 contacts heme.

The protein belongs to the cytochrome P450 family. Heme is required as a cofactor.

It functions in the pathway secondary metabolite biosynthesis. Cytochrome P450 monooxygenase; part of the gene cluster that mediates the biosynthesis of the cyclic tetrapeptide apicidin F (APF). The non-ribosomal peptide synthetase apf1 incorporates four different amino acids to produce apicidin F: L-phenylalanine, D-pipecolic acid (D-pip), N-methoxy-L-tryptophan and L-2-aminooctanedioic acid. L-Phenylalanine is the only proteinogenic amino acid directly used by apf1. The 3 other apf1 substrates are non-proteinogenic and have to be modified by other enzymes of the cluster. Lysine is converted to delta-1-pyrroline-5-carboxylate (P5C) which is reduced to L-pipecolic acid (L-pip) by apf3. L-pip is epimerized to D-pip, probably by apf1 activity, prior to incorporation. L-Tryptophan is N-oxidyzed by one of the cytochrome P450 monooxygenases (apf7 or apf8), and further methylated at the hydroxy group by the O-methyltransferase apf6 to yield N-methoxy-L-tryptophan. The synthesis of the fourth apf1 substrate is more complex. The fatty acid synthase apf5 is involved in the synthesis of the octanoic acid backbone of L-2-aminooctanedioic acid by fixing one acetyl-CoA unit and three malonyl-CoA units. Then one of the cytochrome P450 monooxygenases (apf7 or apf8) may oxidize this backbone to 2-oxooctanoic acid. The aminotransferase apf4 is predicted to catalyze the exchange of the keto group with an amino group. The next step would be the oxidation of 2-aminooctanoic acid by one of the cytochrome P450 monooxygenases (apf7 or apf8). The last step is the oxidation of 2-amino-8-hydroxyoctanoic acid to 2-aminooctanedioic acid is catalyzed by the FAD-dependent monooxygenase apf9. The sequence is that of Cytochrome P450 monooxygenase apf8 from Gibberella fujikuroi (strain CBS 195.34 / IMI 58289 / NRRL A-6831) (Bakanae and foot rot disease fungus).